A 93-amino-acid chain; its full sequence is Beta-defensin 128 (93 aa).

A signal peptide spans 1-18 (MKLFLVLIILLFEVLTDG). Disulfide bonds link Cys-24-Cys-52, Cys-32-Cys-46, and Cys-36-Cys-53.

Belongs to the beta-defensin family.

The protein localises to the secreted. Functionally, has antibacterial activity. The polypeptide is Beta-defensin 128 (DEFB128) (Homo sapiens (Human)).